Here is a 342-residue protein sequence, read N- to C-terminus: Transcription initiation factor TFIID subunit 12 (342 aa).

Residues 1–221 form a disordered region; sequence MKMEEFSPPT…QAPPPQMIPA (221 aa). Over residues 12–35 the composition is skewed to polar residues; it reads PNNHVIVQANPQIAAALSTNSPMQ. Low complexity-rich tracts occupy residues 39–59, 67–89, 96–146, and 180–192; these read PPQG…VGQP, PMRM…QMRA, QQQQ…HLMG, and QQIM…QQHQ. Residues 193–218 show a composition bias toward pro residues; it reads QPPPSQQIQQPPIPQPQQQQAPPPQM. Residues 230–297 form the Histone-fold domain; that stretch reads EKSKLDDLMQ…EFILKNVYNM (68 aa).

It belongs to the TAF12 family. In terms of assembly, interacts (via histone-fold domain) with taf-4 (via the histone-fold domain). Interaction may facilitate the nuclear localization of taf-4.

It is found in the nucleus. Part of the general transcription factor complex TFIID. Plays a role in recruiting taf-4 to the nucleus and thereby activating transcription initiation by RNA polymerase II, as part of the TFIID complex. This is Transcription initiation factor TFIID subunit 12 from Caenorhabditis elegans.